Consider the following 217-residue polypeptide: Urease accessory protein UreF (217 aa).

Belongs to the UreF family. UreD, UreF and UreG form a complex that acts as a GTP-hydrolysis-dependent molecular chaperone, activating the urease apoprotein by helping to assemble the nickel containing metallocenter of UreC. The UreE protein probably delivers the nickel.

The protein localises to the cytoplasm. Functionally, required for maturation of urease via the functional incorporation of the urease nickel metallocenter. This is Urease accessory protein UreF from Ruegeria pomeroyi (strain ATCC 700808 / DSM 15171 / DSS-3) (Silicibacter pomeroyi).